The sequence spans 238 residues: NADH-quinone oxidoreductase subunit C (238 aa).

Residues 1–20 (MSSPDQNPSDAAGQTGSSNE) form a disordered region.

It belongs to the complex I 30 kDa subunit family. In terms of assembly, NDH-1 is composed of 14 different subunits. Subunits NuoB, C, D, E, F, and G constitute the peripheral sector of the complex.

The protein localises to the cell membrane. The enzyme catalyses a quinone + NADH + 5 H(+)(in) = a quinol + NAD(+) + 4 H(+)(out). Its function is as follows. NDH-1 shuttles electrons from NADH, via FMN and iron-sulfur (Fe-S) centers, to quinones in the respiratory chain. The immediate electron acceptor for the enzyme in this species is believed to be a menaquinone. Couples the redox reaction to proton translocation (for every two electrons transferred, four hydrogen ions are translocated across the cytoplasmic membrane), and thus conserves the redox energy in a proton gradient. This Mycobacterium marinum (strain ATCC BAA-535 / M) protein is NADH-quinone oxidoreductase subunit C.